We begin with the raw amino-acid sequence, 309 residues long: HTH-type transcriptional activator AaeR (309 aa).

The region spanning M1–T59 is the HTH lysR-type domain. The H-T-H motif DNA-binding region spans F19–S38.

This sequence belongs to the LysR transcriptional regulatory family.

Activity is regulated by p-hydroxybenzoic acid. In terms of biological role, transcriptional regulator that activates expression of the aaeXAB operon, which is involved in the efflux of aromatic carboxylic acids such as p-hydroxybenzoic acid (pHBA). In the presence of the effector pHBA, acts by binding to a single target within the aaeXAB-aaeR intergenic region. In the absence of pHBA, binds more than 50 sites along the E.coli K12 genome, including genes related to biofilm formation and several genes involved in stress response, suggesting that it might play a role in quorum sensing in the absence of pHBA. The polypeptide is HTH-type transcriptional activator AaeR (Escherichia coli (strain K12)).